The sequence spans 207 residues: Imidazole glycerol phosphate synthase subunit HisH (207 aa).

The Glutamine amidotransferase type-1 domain occupies 1-207 (MIAIVDYNMG…ENFTKYRNLK (207 aa)). C79 acts as the Nucleophile in catalysis. Catalysis depends on residues H185 and E187.

Heterodimer of HisH and HisF.

Its subcellular location is the cytoplasm. The enzyme catalyses 5-[(5-phospho-1-deoxy-D-ribulos-1-ylimino)methylamino]-1-(5-phospho-beta-D-ribosyl)imidazole-4-carboxamide + L-glutamine = D-erythro-1-(imidazol-4-yl)glycerol 3-phosphate + 5-amino-1-(5-phospho-beta-D-ribosyl)imidazole-4-carboxamide + L-glutamate + H(+). It catalyses the reaction L-glutamine + H2O = L-glutamate + NH4(+). It participates in amino-acid biosynthesis; L-histidine biosynthesis; L-histidine from 5-phospho-alpha-D-ribose 1-diphosphate: step 5/9. IGPS catalyzes the conversion of PRFAR and glutamine to IGP, AICAR and glutamate. The HisH subunit catalyzes the hydrolysis of glutamine to glutamate and ammonia as part of the synthesis of IGP and AICAR. The resulting ammonia molecule is channeled to the active site of HisF. The sequence is that of Imidazole glycerol phosphate synthase subunit HisH from Sulfurimonas denitrificans (strain ATCC 33889 / DSM 1251) (Thiomicrospira denitrificans (strain ATCC 33889 / DSM 1251)).